A 111-amino-acid chain; its full sequence is Large ribosomal subunit protein uL22 (111 aa).

Belongs to the universal ribosomal protein uL22 family. As to quaternary structure, part of the 50S ribosomal subunit.

Its function is as follows. This protein binds specifically to 23S rRNA; its binding is stimulated by other ribosomal proteins, e.g. L4, L17, and L20. It is important during the early stages of 50S assembly. It makes multiple contacts with different domains of the 23S rRNA in the assembled 50S subunit and ribosome. The globular domain of the protein is located near the polypeptide exit tunnel on the outside of the subunit, while an extended beta-hairpin is found that lines the wall of the exit tunnel in the center of the 70S ribosome. This chain is Large ribosomal subunit protein uL22, found in Legionella pneumophila (strain Lens).